We begin with the raw amino-acid sequence, 226 residues long: MTCCEGWTSCNGFSLLILILLGVVINCIPLGISLVEADSTSQNPISCYEWWFPGIIGAGLMAIPATTMSLAARKRACCNNKTGMFLSSLFSVITVVGAVYCMLVSLQALLEGPLICNTQANSTVTCEFSLKNLSKFDPESFNLLWFFNGTCVSPTDFKNPTINNMVSNWKIPNSNSEEDRHRIFHFSVFMSLLLVGILELLFGLSQILIGFLGCLCGVSQRRSQIV.

Over 1-14 (MTCCEGWTSCNGFS) the chain is Lumenal. Residues 15–35 (LLILILLGVVINCIPLGISLV) form a helical membrane-spanning segment. Over 36 to 49 (EADSTSQNPISCYE) the chain is Cytoplasmic. A helical membrane pass occupies residues 50–70 (WWFPGIIGAGLMAIPATTMSL). Residues 71 to 83 (AARKRACCNNKTG) lie on the Lumenal side of the membrane. A helical membrane pass occupies residues 84–104 (MFLSSLFSVITVVGAVYCMLV). Residues 105 to 191 (SLQALLEGPL…RIFHFSVFMS (87 aa)) lie on the Cytoplasmic side of the membrane. Residues 192-212 (LLLVGILELLFGLSQILIGFL) form a helical membrane-spanning segment. Over 213–226 (GCLCGVSQRRSQIV) the chain is Lumenal.

This sequence belongs to the L6 tetraspanin family. In terms of processing, glycosylated at Asn-132, Asn-148 and Asn-163 in presence of ceramide which inverts the orientation of TM4SF20 in membranes exposing these residues to the endoplasmic reticulum lumen. Cleaved by signal peptidase at Ser-14 but the peptide does not act as a signal peptide. Cleavage is inhibited by ceramide which inverts the orientation of TM4SF20 in membranes exposing the N-terminus to the cytosol and not to the endoplasmic reticulum lumen.

It localises to the membrane. The protein resides in the endoplasmic reticulum membrane. In terms of biological role, polytopic transmembrane protein. Inhibits regulated intramembrane proteolysis (RIP) of CREB3L1, inhibiting its activation and the induction of collagen synthesis. In response to ceramide, which alters TM4SF20 membrane topology, stimulates RIP activation of CREB3L1. Ceramide reverses the direction through which transmembrane helices are translocated into the endoplasmic reticulum membrane during translation of TM4SF20, this mechanism is called 'regulated alternative translocation' (RAT) and regulates the function of the transmembrane protein. This is Transmembrane 4 L6 family member 20 (Tm4sf20) from Mus musculus (Mouse).